The sequence spans 734 residues: DNA ligase (734 aa).

Residues 42-46, 91-92, and E125 contribute to the NAD(+) site; these read DAEYD and SL. The active-site N6-AMP-lysine intermediate is the K127. NAD(+) is bound by residues R148, E185, K301, and K325. 4 residues coordinate Zn(2+): C430, C433, C454, and C460. In terms of domain architecture, BRCT spans 655 to 734; the sequence is SADSEVAGKT…DTWLQRVGKA (80 aa).

The protein belongs to the NAD-dependent DNA ligase family. LigA subfamily. Mg(2+) is required as a cofactor. Mn(2+) serves as cofactor.

The catalysed reaction is NAD(+) + (deoxyribonucleotide)n-3'-hydroxyl + 5'-phospho-(deoxyribonucleotide)m = (deoxyribonucleotide)n+m + AMP + beta-nicotinamide D-nucleotide.. DNA ligase that catalyzes the formation of phosphodiester linkages between 5'-phosphoryl and 3'-hydroxyl groups in double-stranded DNA using NAD as a coenzyme and as the energy source for the reaction. It is essential for DNA replication and repair of damaged DNA. The polypeptide is DNA ligase (Mesorhizobium japonicum (strain LMG 29417 / CECT 9101 / MAFF 303099) (Mesorhizobium loti (strain MAFF 303099))).